The chain runs to 131 residues: Putative gamma-taxilin 2 (131 aa).

Belongs to the taxilin family.

In Pan troglodytes (Chimpanzee), this protein is Putative gamma-taxilin 2 (TXLNGY).